The sequence spans 223 residues: Protein FAM3D (223 aa).

Residues 1–25 (MRVAGLIRVVVFIFTIVTMWVFLRS) form the signal peptide. 2 cysteine pairs are disulfide-bonded: C54–C82 and C60–C217. A GG-type lectin domain is found at 62-221 (NNFFAFKISS…LELEGCVPRK (160 aa)). The N-linked (GlcNAc...) asparagine glycan is linked to N106.

It belongs to the FAM3 family.

The protein localises to the secreted. This chain is Protein FAM3D, found in Mus musculus (Mouse).